Reading from the N-terminus, the 156-residue chain is Small ribosomal subunit protein uS7c (156 aa).

The protein belongs to the universal ribosomal protein uS7 family. In terms of assembly, part of the 30S ribosomal subunit.

Its subcellular location is the plastid. The protein resides in the chloroplast. Functionally, one of the primary rRNA binding proteins, it binds directly to 16S rRNA where it nucleates assembly of the head domain of the 30S subunit. This chain is Small ribosomal subunit protein uS7c (rps7), found in Chara vulgaris (Common stonewort).